A 454-amino-acid chain; its full sequence is O-phospho-L-seryl-tRNA:Cys-tRNA synthase 2 (454 aa).

Residues 146–147 (AR), N251, and 274–276 (SGH) contribute to the pyridoxal 5'-phosphate site. K277 is modified (N6-(pyridoxal phosphate)lysine).

It belongs to the SepCysS family. Homodimer. Interacts with SepRS. It depends on pyridoxal 5'-phosphate as a cofactor.

It catalyses the reaction O-phospho-L-seryl-tRNA(Cys) + hydrogen sulfide + H(+) = L-cysteinyl-tRNA(Cys) + phosphate. Functionally, converts O-phospho-L-seryl-tRNA(Cys) (Sep-tRNA(Cys)) to L-cysteinyl-tRNA(Cys) (Cys-tRNA(Cys)). The polypeptide is O-phospho-L-seryl-tRNA:Cys-tRNA synthase 2 (Methanoregula boonei (strain DSM 21154 / JCM 14090 / 6A8)).